Reading from the N-terminus, the 193-residue chain is Large ribosomal subunit protein eL19B (193 aa).

Residues 157–179 (EQQDARRARAKAARQRRAKAVEE) are disordered. Over residues 164-174 (ARAKAARQRRA) the composition is skewed to basic residues.

This sequence belongs to the eukaryotic ribosomal protein eL19 family. Component of the large ribosomal subunit (LSU). Mature yeast ribosomes consist of a small (40S) and a large (60S) subunit. The 40S small subunit contains 1 molecule of ribosomal RNA (18S rRNA) and at least 33 different proteins. The large 60S subunit contains 3 rRNA molecules (25S, 5.8S and 5S rRNA) and at least 46 different proteins. eL19 lies in close proximity to the binding site for eukaryotic initiation factor eIF4G.

Its subcellular location is the cytoplasm. Component of the ribosome, a large ribonucleoprotein complex responsible for the synthesis of proteins in the cell. The small ribosomal subunit (SSU) binds messenger RNAs (mRNAs) and translates the encoded message by selecting cognate aminoacyl-transfer RNA (tRNA) molecules. The large subunit (LSU) contains the ribosomal catalytic site termed the peptidyl transferase center (PTC), which catalyzes the formation of peptide bonds, thereby polymerizing the amino acids delivered by tRNAs into a polypeptide chain. The nascent polypeptides leave the ribosome through a tunnel in the LSU and interact with protein factors that function in enzymatic processing, targeting, and the membrane insertion of nascent chains at the exit of the ribosomal tunnel. eL19 may play a role in the last stages of translation initiation, in particular subunit joining and shedding/releasing factors. In Schizosaccharomyces pombe (strain 972 / ATCC 24843) (Fission yeast), this protein is Large ribosomal subunit protein eL19B (rpl1902).